The following is a 2471-amino-acid chain: Probable polyketide synthase 24 (2471 aa).

One can recognise a Ketosynthase family 3 (KS3) domain in the interval 21–449 (ENLVAIVGVG…GSNCCLVLSQ (429 aa)). Catalysis depends on for beta-ketoacyl synthase activity residues cysteine 190, histidine 332, and histidine 372. An acyl/malonyl transferase region spans residues 654 to 687 (GIKASFMLGHSLGEVTTAYCSGMIDIDQLCYLIY). Catalysis depends on serine 664, which acts as the For acyl/malonyl transferase activity. The tract at residues 953–1075 (ISILGNSMQD…SNFHLNSNDN (123 aa)) is N-terminal hotdog fold. The PKS/mFAS DH domain maps to 953-1245 (ISILGNSMQD…VKSLTPVKDP (293 aa)). The active-site Proton acceptor; for dehydratase activity is the histidine 987. Residues 1094–1245 (NLSSIPWDEF…VKSLTPVKDP (152 aa)) are C-terminal hotdog fold. The Proton donor; for dehydratase activity role is filled by aspartate 1157. A coiled-coil region spans residues 1426–1469 (IINEQQQQQQQQQQQQQQQQQQQQQLLNNENNKESLKNLLVNCN). A Carrier domain is found at 2336-2413 (SSSTNVKNKF…MVYQIINDSL (78 aa)). Serine 2373 is modified (O-(pantetheine 4'-phosphoryl)serine).

It depends on pantetheine 4'-phosphate as a cofactor.

Probable polyketide synthase. The sequence is that of Probable polyketide synthase 24 (pks24) from Dictyostelium discoideum (Social amoeba).